A 629-amino-acid chain; its full sequence is Dihydroxy-acid dehydratase 2 (629 aa).

Asp82 is a Mg(2+) binding site. A [2Fe-2S] cluster-binding site is contributed by Cys123. Residues Asp124 and Lys125 each contribute to the Mg(2+) site. Lys125 carries the post-translational modification N6-carboxylysine. Cys197 contributes to the [2Fe-2S] cluster binding site. Glu493 serves as a coordination point for Mg(2+). The Proton acceptor role is filled by Ser519. Residues 603–629 form a disordered region; that stretch reads DKGGVRRLPPDELGGPEAAFDTQTRAG.

Belongs to the IlvD/Edd family. Homodimer. [2Fe-2S] cluster is required as a cofactor. It depends on Mg(2+) as a cofactor.

It carries out the reaction (2R)-2,3-dihydroxy-3-methylbutanoate = 3-methyl-2-oxobutanoate + H2O. It catalyses the reaction (2R,3R)-2,3-dihydroxy-3-methylpentanoate = (S)-3-methyl-2-oxopentanoate + H2O. It participates in amino-acid biosynthesis; L-isoleucine biosynthesis; L-isoleucine from 2-oxobutanoate: step 3/4. Its pathway is amino-acid biosynthesis; L-valine biosynthesis; L-valine from pyruvate: step 3/4. Functions in the biosynthesis of branched-chain amino acids. Catalyzes the dehydration of (2R,3R)-2,3-dihydroxy-3-methylpentanoate (2,3-dihydroxy-3-methylvalerate) into 2-oxo-3-methylpentanoate (2-oxo-3-methylvalerate) and of (2R)-2,3-dihydroxy-3-methylbutanoate (2,3-dihydroxyisovalerate) into 2-oxo-3-methylbutanoate (2-oxoisovalerate), the penultimate precursor to L-isoleucine and L-valine, respectively. The protein is Dihydroxy-acid dehydratase 2 of Nocardia farcinica (strain IFM 10152).